The primary structure comprises 359 residues: Mitochondrial glutathione transporter SLC25A39 (359 aa).

The Mitochondrial intermembrane portion of the chain corresponds to 1–14 (MADQDPGGISPLQQ). Solcar repeat units follow at residues 9–151 (ISPL…LKAF), 159–243 (SDLY…VKSW), and 253–347 (TSVG…GKNF). Residues 15–35 (MVASGAGAVVTSLFMTPLDVV) traverse the membrane as a helical segment. At 36 to 121 (KVRLQSQRPS…VKIVRHEGTR (86 aa)) the chain is on the mitochondrial matrix side. The [2Fe-2S] cluster site is built by cysteine 74, cysteine 78, cysteine 88, and cysteine 94. Residues 122-142 (TLWSGLPATLVMTVPATAAYF) traverse the membrane as a helical segment. The Mitochondrial intermembrane segment spans residues 143–164 (TAYDQLKAFLCGRALTSDLYAP). The helical transmembrane segment at 165 to 185 (MVAGALARLGTVTVISPLELV) threads the bilayer. The Mitochondrial matrix portion of the chain corresponds to 186-214 (RTKLQAQHLSYRELGTCVRAAVAQGGWRS). The chain crosses the membrane as a helical span at residues 215–235 (LWLGWGPTALRDVPFSALYWF). Residues 236-255 (NYELVKSWLSGLRPKDQTSV) are Mitochondrial intermembrane-facing. A helical membrane pass occupies residues 256–276 (GISFVAGGISGMVAATLTLPF). Residues 277 to 317 (DVVKTQRQVALGAVEALRVMPLNTDSTWLLLRRILAESGTR) are Mitochondrial matrix-facing. A helical transmembrane segment spans residues 318–338 (GLFAGFLPRIIKAAPSCAIMI). Residues 339-359 (STYEFGKNFFQRLNREQLLSP) lie on the Mitochondrial intermembrane side of the membrane.

This sequence belongs to the mitochondrial carrier (TC 2.A.29) family. Post-translationally, cleaved and degraded by AFG3L2; degradation by AFG3L2 is regulated by the ability of SLC25A39 to bind iron-sulfur. In absence of mitochondrial glutathione, SLC25A39 binds iron-sulfur, preventing cleavage and degradation by AFG3L2. The presence of mitochondrial glutathione prevents iron-sulfur-binding to SLC25A39, promoting cleavage and degradation by AFG3L2.

The protein resides in the mitochondrion inner membrane. It carries out the reaction glutathione(in) = glutathione(out). The activity of SLC25A39 is regulated by levels of mitochondrial glutathione via its ability to bind [2Fe-2S] iron-sulfur cluster. Upon physiological levels of mitochondrial glutathione, glutathione prevents iron-sulfur-binding to SLC25A39 promoting cleavage and degradation by AFG3L2. Upon depletion of mitochondrial glutathione, SLC25A39 binds iron-sulfur, preventing cleavage and degradation by AFG3L2. Mitochondrial transporter required for glutathione import into mitochondria. Glutathione, which plays key roles in oxidative metabolism, is produced exclusively in the cytosol and is imported in many organelles. Mitochondrial glutathione is required for the activity and stability of proteins containing iron-sulfur clusters, as well as erythropoiesis. The chain is Mitochondrial glutathione transporter SLC25A39 (SLC25A39) from Bos taurus (Bovine).